We begin with the raw amino-acid sequence, 281 residues long: Pantothenate synthetase (281 aa).

30 to 37 (MGYLHEGH) lines the ATP pocket. The active-site Proton donor is His37. Residue Gln61 coordinates (R)-pantoate. Residue Gln61 participates in beta-alanine binding. Residue 147-150 (GEKD) coordinates ATP. Gln153 lines the (R)-pantoate pocket. ATP contacts are provided by residues Ile176 and 184–187 (KSSR).

It belongs to the pantothenate synthetase family. Homodimer.

The protein localises to the cytoplasm. It catalyses the reaction (R)-pantoate + beta-alanine + ATP = (R)-pantothenate + AMP + diphosphate + H(+). The protein operates within cofactor biosynthesis; (R)-pantothenate biosynthesis; (R)-pantothenate from (R)-pantoate and beta-alanine: step 1/1. Its function is as follows. Catalyzes the condensation of pantoate with beta-alanine in an ATP-dependent reaction via a pantoyl-adenylate intermediate. In Clostridium botulinum (strain 657 / Type Ba4), this protein is Pantothenate synthetase.